Reading from the N-terminus, the 274-residue chain is Pyridoxal phosphate homeostasis protein (274 aa).

Ser6 bears the Phosphoserine mark. Lys47 carries the post-translational modification N6-(pyridoxal phosphate)lysine. Tyr69 carries the phosphotyrosine modification. Lys125 carries the N6-succinyllysine modification. Phosphoserine occurs at positions 226 and 244.

It belongs to the pyridoxal phosphate-binding protein YggS/PROSC family.

Functionally, pyridoxal 5'-phosphate (PLP)-binding protein, which may be involved in intracellular homeostatic regulation of pyridoxal 5'-phosphate (PLP), the active form of vitamin B6. The protein is Pyridoxal phosphate homeostasis protein of Mus musculus (Mouse).